We begin with the raw amino-acid sequence, 445 residues long: Phosphoglucosamine mutase (445 aa).

Ser-102 (phosphoserine intermediate) is an active-site residue. Residues Ser-102, Asp-241, Asp-243, and Asp-245 each coordinate Mg(2+). Ser-102 is modified (phosphoserine).

Belongs to the phosphohexose mutase family. Requires Mg(2+) as cofactor. Activated by phosphorylation.

The enzyme catalyses alpha-D-glucosamine 1-phosphate = D-glucosamine 6-phosphate. Its function is as follows. Catalyzes the conversion of glucosamine-6-phosphate to glucosamine-1-phosphate. This Acinetobacter baumannii (strain SDF) protein is Phosphoglucosamine mutase.